The following is a 463-amino-acid chain: Zinc finger protein PLAGL1 (463 aa).

7 consecutive C2H2-type zinc fingers follow at residues Tyr-4–His-26, Tyr-32–His-56, His-62–His-84, Phe-91–His-113, Leu-120–His-142, His-156–His-178, and Phe-184–His-207. Residues Leu-285–Tyr-310 form a disordered region. Positions Pro-287–Pro-297 are enriched in pro residues. Residues Leu-298–Tyr-310 show a composition bias toward polar residues.

The protein belongs to the krueppel C2H2-type zinc-finger protein family. As to quaternary structure, interacts with THRSP.

The protein resides in the nucleus. In terms of biological role, acts as a transcriptional activator. Involved in the transcriptional regulation of type 1 receptor for pituitary adenylate cyclase-activating polypeptide. This Sus scrofa (Pig) protein is Zinc finger protein PLAGL1 (PLAGL1).